The sequence spans 246 residues: Biosynthetic peptidoglycan transglycosylase (246 aa).

Residues 28–48 traverse the membrane as a helical segment; sequence FALFLVLFLSSVVLFRFVPVP.

It belongs to the glycosyltransferase 51 family.

The protein resides in the cell inner membrane. It catalyses the reaction [GlcNAc-(1-&gt;4)-Mur2Ac(oyl-L-Ala-gamma-D-Glu-L-Lys-D-Ala-D-Ala)](n)-di-trans,octa-cis-undecaprenyl diphosphate + beta-D-GlcNAc-(1-&gt;4)-Mur2Ac(oyl-L-Ala-gamma-D-Glu-L-Lys-D-Ala-D-Ala)-di-trans,octa-cis-undecaprenyl diphosphate = [GlcNAc-(1-&gt;4)-Mur2Ac(oyl-L-Ala-gamma-D-Glu-L-Lys-D-Ala-D-Ala)](n+1)-di-trans,octa-cis-undecaprenyl diphosphate + di-trans,octa-cis-undecaprenyl diphosphate + H(+). Its pathway is cell wall biogenesis; peptidoglycan biosynthesis. Peptidoglycan polymerase that catalyzes glycan chain elongation from lipid-linked precursors. In Pasteurella multocida (strain Pm70), this protein is Biosynthetic peptidoglycan transglycosylase.